The following is an 897-amino-acid chain: Alanine--tRNA ligase (897 aa).

Zn(2+) contacts are provided by H581, H585, C684, and H688.

The protein belongs to the class-II aminoacyl-tRNA synthetase family. Requires Zn(2+) as cofactor.

The protein resides in the cytoplasm. It carries out the reaction tRNA(Ala) + L-alanine + ATP = L-alanyl-tRNA(Ala) + AMP + diphosphate. In terms of biological role, catalyzes the attachment of alanine to tRNA(Ala) in a two-step reaction: alanine is first activated by ATP to form Ala-AMP and then transferred to the acceptor end of tRNA(Ala). Also edits incorrectly charged Ser-tRNA(Ala) and Gly-tRNA(Ala) via its editing domain. The protein is Alanine--tRNA ligase of Mycobacterium sp. (strain KMS).